The sequence spans 780 residues: ATP-dependent 6-phosphofructokinase, muscle type (780 aa).

An N-acetylthreonine modification is found at threonine 2. Residues 2–390 (THEEHHAAKS…NWEVYKLLAH (389 aa)) form an N-terminal catalytic PFK domain 1 region. Residues glycine 25, 88-89 (RC), and 118-121 (GDGS) each bind ATP. Aspartate 119 provides a ligand contact to Mg(2+). Substrate is bound by residues 164–166 (SID), arginine 201, 208–210 (MGR), glutamate 264, arginine 292, and 298–301 (HVQR). The Proton acceptor role is filled by aspartate 166. At serine 377 the chain carries Phosphoserine. The interval 391–401 (VRPPVTKSGSY) is interdomain linker. The C-terminal regulatory PFK domain 2 stretch occupies residues 402–780 (TVAVMNVGAP…TRKRSGEATI (379 aa)). Beta-D-fructose 2,6-bisphosphate is bound by residues arginine 471 and 528–532 (TVSNN). A glycan (O-linked (GlcNAc) serine) is linked at serine 530. N6-(2-hydroxyisobutyryl)lysine is present on lysine 557. Residues arginine 566, 573–575 (MGG), glutamate 629, arginine 655, and 661–664 (HMQQ) each bind beta-D-fructose 2,6-bisphosphate. Serine 667 carries the post-translational modification Phosphoserine. Arginine 735 is a beta-D-fructose 2,6-bisphosphate binding site. Serine 775 carries the phosphoserine modification.

The protein belongs to the phosphofructokinase type A (PFKA) family. ATP-dependent PFK group I subfamily. Eukaryotic two domain clade 'E' sub-subfamily. In terms of assembly, homo- and heterotetramers. Phosphofructokinase (PFK) enzyme functions as a tetramer composed of different combinations of 3 types of subunits, called PFKM (M), PFKL (L) and PFKP (P). The composition of the PFK tetramer differs according to the tissue type it is present in. The kinetic and regulatory properties of the tetrameric enzyme are dependent on the subunit composition, hence can vary across tissues. Interacts (via C-terminus) with HK1 (via N-terminal spermatogenic cell-specific region). Requires Mg(2+) as cofactor. Post-translationally, glcNAcylation decreases enzyme activity.

It is found in the cytoplasm. It catalyses the reaction beta-D-fructose 6-phosphate + ATP = beta-D-fructose 1,6-bisphosphate + ADP + H(+). Its pathway is carbohydrate degradation; glycolysis; D-glyceraldehyde 3-phosphate and glycerone phosphate from D-glucose: step 3/4. Allosterically activated by ADP, AMP, or fructose 2,6-bisphosphate, and allosterically inhibited by ATP or citrate. In terms of biological role, catalyzes the phosphorylation of D-fructose 6-phosphate to fructose 1,6-bisphosphate by ATP, the first committing step of glycolysis. In Sus scrofa (Pig), this protein is ATP-dependent 6-phosphofructokinase, muscle type (PFKM).